Reading from the N-terminus, the 206-residue chain is Large ribosomal subunit protein uL4 (206 aa).

A disordered region spans residues 42–93; sequence KKQQGTHKTKNRSEVSRTGAKMYKQKGTGRARHHSARAPQFRGGGKAHGPVV. Over residues 64-77 the composition is skewed to basic residues; sequence YKQKGTGRARHHSA.

This sequence belongs to the universal ribosomal protein uL4 family. Part of the 50S ribosomal subunit.

One of the primary rRNA binding proteins, this protein initially binds near the 5'-end of the 23S rRNA. It is important during the early stages of 50S assembly. It makes multiple contacts with different domains of the 23S rRNA in the assembled 50S subunit and ribosome. Functionally, forms part of the polypeptide exit tunnel. This is Large ribosomal subunit protein uL4 from Agrobacterium fabrum (strain C58 / ATCC 33970) (Agrobacterium tumefaciens (strain C58)).